Consider the following 558-residue polypeptide: Phosphatidylserine lipase ABHD16A (558 aa).

A run of 2 helical transmembrane segments spans residues 60–80 (ILAL…FAFF) and 93–113 (VVPF…VACL). The Cytoplasmic segment spans residues 114-558 (RGIGRWTNPQ…AQNFQMPWHL (445 aa)). The AB hydrolase-1 domain occupies 281-407 (LVICCEGNAG…LVTRTVRQHL (127 aa)). Catalysis depends on charge relay system residues S355, D430, and H507.

It belongs to the AB hydrolase superfamily. ABHD16 family.

It is found in the membrane. It catalyses the reaction 1-heptadecanoyl-2-(5Z,8Z,11Z,14Z-eicosatetraenoyl)-sn-glycero-3-phosphoserine + H2O = 1-heptadecanoyl-sn-glycero-3-phosphoserine + (5Z,8Z,11Z,14Z)-eicosatetraenoate + H(+). The catalysed reaction is 1-hexadecanoyl-2-(9Z-octadecenoyl)-sn-glycero-3-phospho-L-serine + H2O = 1-hexadecanoyl-sn-glycero-3-phospho-L-serine + (9Z)-octadecenoate + H(+). It carries out the reaction 1-octadecanoyl-2-(9Z,12Z-octadecadienoyl)-sn-glycero-3-phosphoserine + H2O = 1-octadecanoyl-sn-glycero-3-phosphoserine + (9Z,12Z)-octadecadienoate + H(+). The enzyme catalyses 1-heptadecanoyl-2-(5Z,8Z,11Z,14Z-eicosatetraenoyl)-sn-glycero-3-phosphocholine + H2O = 1-heptadecanoyl-sn-glycero-3-phosphocholine + (5Z,8Z,11Z,14Z)-eicosatetraenoate + H(+). It catalyses the reaction 1-hexadecanoyl-2-(9Z-octadecenoyl)-sn-glycero-3-phosphoglycerol + H2O = 1-hexadecanoyl-sn-glycero-3-phosphoglycerol + (9Z)-octadecenoate + H(+). The catalysed reaction is 1-hexadecanoyl-2-(9Z-octadecenoyl)-sn-glycero-3-phospho-(1D-myo-inositol) + H2O = 1-hexadecanoyl-sn-glycero-3-phospho-(1D-myo-inositol) + (9Z)-octadecenoate + H(+). It carries out the reaction 1-heptadecanoyl-2-(5Z,8Z,11Z,14Z-eicosatetraenoyl)-sn-glycero-3-phosphoethanolamine + H2O = 1-heptadecanoyl-sn-glycero-3-phosphoethanolamine + (5Z,8Z,11Z,14Z)-eicosatetraenoate + H(+). The enzyme catalyses 1-hexadecanoyl-2-(9Z-octadecenoyl)-sn-glycero-3-phospho-(1'-sn-glycerol) + H2O = 1-hexadecanoyl-sn-glycero-3-phospho-(1'-sn-glycerol) + (9Z)-octadecenoate + H(+). It catalyses the reaction Hydrolyzes glycerol monoesters of long-chain fatty acids.. The catalysed reaction is 1-tetradecanoylglycerol + H2O = tetradecanoate + glycerol + H(+). It carries out the reaction 2-hexadecanoylglycerol + H2O = glycerol + hexadecanoate + H(+). The enzyme catalyses 1-(9Z-octadecenoyl)-glycerol + H2O = glycerol + (9Z)-octadecenoate + H(+). It catalyses the reaction 2-(9Z-octadecenoyl)-glycerol + H2O = glycerol + (9Z)-octadecenoate + H(+). The catalysed reaction is 2-(9Z,12Z-octadecadienoyl)-glycerol + H2O = (9Z,12Z)-octadecadienoate + glycerol + H(+). It carries out the reaction 1-(5Z,8Z,11Z,14Z-eicosatetraenoyl)-glycerol + H2O = glycerol + (5Z,8Z,11Z,14Z)-eicosatetraenoate + H(+). The enzyme catalyses 2-(5Z,8Z,11Z,14Z-eicosatetraenoyl)-glycerol + H2O = glycerol + (5Z,8Z,11Z,14Z)-eicosatetraenoate + H(+). It catalyses the reaction prostaglandin D2-1-glycerol ester + H2O = prostaglandin D2 + glycerol + H(+). The catalysed reaction is 2-glyceryl-15-deoxy-Delta(12,14)-prostaglandin J2 + H2O = 15-deoxy-Delta(12,14)-prostaglandin J2 + glycerol + H(+). It carries out the reaction 1-(9Z,12Z-octadecadienoyl)-glycerol + H2O = (9Z,12Z)-octadecadienoate + glycerol + H(+). In terms of biological role, phosphatidylserine (PS) lipase that mediates the hydrolysis of phosphatidylserine to generate lysophosphatidylserine (LPS). LPS constitutes a class of signaling lipids that regulates immunological and neurological processes. Has no activity towards diacylglycerol, triacylglycerol or lysophosphatidylserine lipase. Also has monoacylglycerol lipase activity, with preference for 1-(9Z,12Z-octadecadienoyl)-glycerol (1-LG) and 2-glyceryl-15-deoxy-Delta(12,14)-prostaglandin J2 (15d-PGJ(2)-G). The polypeptide is Phosphatidylserine lipase ABHD16A (Bos taurus (Bovine)).